The primary structure comprises 220 residues: Small ribosomal subunit protein uS3c (220 aa).

Residues 39-120 (IRDFIKNYVK…KLIIDIIRIT (82 aa)) form the KH type-2 domain.

Belongs to the universal ribosomal protein uS3 family. In terms of assembly, part of the 30S ribosomal subunit.

The protein resides in the plastid. This chain is Small ribosomal subunit protein uS3c (rps3), found in Epifagus virginiana (Beechdrops).